A 661-amino-acid polypeptide reads, in one-letter code: Vasorin (661 aa).

The signal sequence occupies residues 1–19; that stretch reads MWHLLVWIILLATAQQMIT. Residues 20–50 form the LRRNT domain; the sequence is EGCPAGCQCNTPQTVFCLARKNSNFPRSVPP. Residues 20–563 are Extracellular-facing; it reads EGCPAGCQCN…VTQSQEGNLT (544 aa). LRR repeat units follow at residues 52 to 72, 75 to 96, 99 to 120, 123 to 144, 147 to 168, 169 to 189, 191 to 212, 215 to 237, 238 to 258, and 259 to 281; these read TLNL…SFIG, GLHL…VFRN, NLSN…TFQG, RLER…AFKG, SLLE…SLPH, LLLL…VFNA, NIES…LLSG, NLHE…HGLT, KLNI…LSNL, and PALQ…LFRS. A glycan (N-linked (GlcNAc...) asparagine) is linked at N99. The LRRCT domain occupies 293-346; the sequence is NPFNCVCSLGWLSEWMRVSGVVLLRPDETRCHFPPKNAGKTLRQLRDSEYGCPA. The segment covering 348-385 has biased composition (low complexity); sequence TTIQMPSTMPPSTTTGPPTTTKHLQTEAPTTASTTTTT. A disordered region spans residues 348–395; that stretch reads TTIQMPSTMPPSTTTGPPTTTKHLQTEAPTTASTTTTTIPHQEQEEDT. The EGF-like domain occupies 403 to 440; the sequence is EDTLCPPQTCLNGGSCHLDPTGQLECECPPGFQGTYCE. 3 disulfides stabilise this stretch: C407–C418, C412–C428, and C430–C439. The Fibronectin type-III domain maps to 455–543; the sequence is EQVKIIEVTV…EEDLCTETHT (89 aa). N518 and N561 each carry an N-linked (GlcNAc...) asparagine glycan. Residues 564-584 form a helical membrane-spanning segment; that stretch reads LVLVPAVAAGILLSAAVAAAA. The Cytoplasmic portion of the chain corresponds to 585–661; it reads CYARRRKGKG…PTGRLPHSYF (77 aa). The segment at 591–661 is disordered; it reads KGKGHSVEDG…PTGRLPHSYF (71 aa). The segment covering 606-623 has biased composition (basic and acidic residues); sequence DGVKKGLDGKGEVKKLSE.

It localises to the membrane. Its function is as follows. May act as an inhibitor of TGF-beta signaling. In Xenopus tropicalis (Western clawed frog), this protein is Vasorin (vasn).